The sequence spans 252 residues: PF03932 family protein CutC (252 aa).

Belongs to the CutC family.

The protein localises to the cytoplasm. This chain is PF03932 family protein CutC, found in Sodalis glossinidius (strain morsitans).